The primary structure comprises 243 residues: Glucosamine-6-phosphate deaminase (243 aa).

Asp67 acts as the Proton acceptor; for enolization step in catalysis. Catalysis depends on Asn137, which acts as the For ring-opening step. The active-site Proton acceptor; for ring-opening step is the His139. The active-site For ring-opening step is Glu144.

It belongs to the glucosamine/galactosamine-6-phosphate isomerase family. NagB subfamily.

It catalyses the reaction alpha-D-glucosamine 6-phosphate + H2O = beta-D-fructose 6-phosphate + NH4(+). The protein operates within amino-sugar metabolism; N-acetylneuraminate degradation; D-fructose 6-phosphate from N-acetylneuraminate: step 5/5. Its function is as follows. Catalyzes the reversible isomerization-deamination of glucosamine 6-phosphate (GlcN6P) to form fructose 6-phosphate (Fru6P) and ammonium ion. This chain is Glucosamine-6-phosphate deaminase, found in Staphylococcus epidermidis (strain ATCC 12228 / FDA PCI 1200).